A 559-amino-acid polypeptide reads, in one-letter code: Phenylalanine--tRNA ligase beta subunit (559 aa).

One can recognise a B5 domain in the interval 274–350 (FEPKIIDVHT…LGYGFNELPA (77 aa)). Residues D328, D334, E337, and N338 each coordinate Mg(2+).

This sequence belongs to the phenylalanyl-tRNA synthetase beta subunit family. Type 2 subfamily. As to quaternary structure, tetramer of two alpha and two beta subunits. Mg(2+) is required as a cofactor.

Its subcellular location is the cytoplasm. The enzyme catalyses tRNA(Phe) + L-phenylalanine + ATP = L-phenylalanyl-tRNA(Phe) + AMP + diphosphate + H(+). The chain is Phenylalanine--tRNA ligase beta subunit from Methanosphaera stadtmanae (strain ATCC 43021 / DSM 3091 / JCM 11832 / MCB-3).